The chain runs to 254 residues: Thiazole synthase (254 aa).

Lys-95 functions as the Schiff-base intermediate with DXP in the catalytic mechanism. Residues Gly-156, Ala-182–Gly-183, and Asn-204–Thr-205 contribute to the 1-deoxy-D-xylulose 5-phosphate site.

The protein belongs to the ThiG family. As to quaternary structure, homotetramer. Forms heterodimers with either ThiH or ThiS.

It is found in the cytoplasm. It carries out the reaction [ThiS sulfur-carrier protein]-C-terminal-Gly-aminoethanethioate + 2-iminoacetate + 1-deoxy-D-xylulose 5-phosphate = [ThiS sulfur-carrier protein]-C-terminal Gly-Gly + 2-[(2R,5Z)-2-carboxy-4-methylthiazol-5(2H)-ylidene]ethyl phosphate + 2 H2O + H(+). The protein operates within cofactor biosynthesis; thiamine diphosphate biosynthesis. In terms of biological role, catalyzes the rearrangement of 1-deoxy-D-xylulose 5-phosphate (DXP) to produce the thiazole phosphate moiety of thiamine. Sulfur is provided by the thiocarboxylate moiety of the carrier protein ThiS. In vitro, sulfur can be provided by H(2)S. The polypeptide is Thiazole synthase (Shewanella sediminis (strain HAW-EB3)).